A 689-amino-acid polypeptide reads, in one-letter code: MNTVTLLIEIGTEELPTRAVTELASAGAQLWDNVLTTALIPHGEIEAFGTPRRLAWRVRQLAVKQTDQKIERKGPSLQAAKDKNNAWTKAALGFAASCGVDVEQLAIETTEKGQWLIFRGEKMGENVADLLPDLFAEVMDKLPIAKRMRWGDCDHAFVRPVHNLLVLADDNVWDLEFFGVASQHLSQGHRVHHAEPVAIRHAKTYEADLEAAYVIVDHETRCNRIREQVQALARDLGGKALMPEALVKEVASLTEWPIAIAGAFDRSFLKMPPEVLITTMQDHQKTFAVMDTLGTLLPYFIAVANLESRNEEEVRKGNEKVIRPRFADAEFFWQQDLKRPLEDYLPQLERVIYQEKLGTLAEKTRRVQTIACELTAMTAADKNSVYTAARLAKSDLQTAMVQEFPELQGVMGRYYALHQGLSAEVAQALEEQYFPTAAGDKLPQTAVGITLSIAEKLDTLIGGFSIGAQPTGSKDPYALRRMAIGLIRLLIEKKVPLLLTPWLEKAAGQFHDALGAKNFVMDVRAYILERLQAYYREQNIAPEIVQAVLALNGDNLVDIDQRVRALAPFSNSDAALSFFASAKRIRNILKKNGTQQTAVRTDLLQESAEKHLWQQWEQMHNALLAAVSAGNYETALQQLGSLAEPLEAFFAQVMVMTENPDVQINRLALLTALQKGFELIADLSIISNL.

The protein belongs to the class-II aminoacyl-tRNA synthetase family. Tetramer of two alpha and two beta subunits.

Its subcellular location is the cytoplasm. It carries out the reaction tRNA(Gly) + glycine + ATP = glycyl-tRNA(Gly) + AMP + diphosphate. The chain is Glycine--tRNA ligase beta subunit from Dichelobacter nodosus (strain VCS1703A).